The chain runs to 185 residues: Translocon-associated protein subunit gamma (185 aa).

An N-acetylmethionine modification is found at Met-1. At 1–27 (MAPKGSCKQQSEEDLLLQDFSRNLSAK) the chain is on the lumenal side. Ser-11 bears the Phosphoserine mark. The helical transmembrane segment at 28 to 48 (SSALFFGNAFIVSAIPIWLYW) threads the bilayer. Topologically, residues 49 to 54 (RIWHMD) are cytoplasmic. A helical transmembrane segment spans residues 55-76 (LIQSAVLYSVMTLVSTYLVAFA). Residues 77 to 135 (YKNVKFVLKHKVAQKREDAVSKEVTRKLSEADNRKMSRKEKDERILWKKNEVADYEATT) are Lumenal-facing. A Phosphoserine modification is found at Ser-105. The helical transmembrane segment at 136 to 157 (FSIFYNNTLFLVVVIVASFFIL) threads the bilayer. Residues 158–163 (KNFNPT) are Cytoplasmic-facing. A helical membrane pass occupies residues 164–184 (VNYILSISASSGLIALLSTGS).

This sequence belongs to the TRAP-gamma family. As to quaternary structure, heterotetramer of TRAP-alpha, TRAP-beta, TRAP-delta and TRAP-gamma.

The protein localises to the endoplasmic reticulum membrane. In terms of biological role, TRAP proteins are part of a complex whose function is to bind calcium to the ER membrane and thereby regulate the retention of ER resident proteins. This is Translocon-associated protein subunit gamma (SSR3) from Pongo abelii (Sumatran orangutan).